Here is a 194-residue protein sequence, read N- to C-terminus: NADH-quinone oxidoreductase subunit B (194 aa).

Cys73, Cys74, Cys138, and Cys168 together coordinate [4Fe-4S] cluster.

It belongs to the complex I 20 kDa subunit family. NDH-1 is composed of 14 different subunits. Subunits NuoB, C, D, E, F, and G constitute the peripheral sector of the complex. [4Fe-4S] cluster serves as cofactor.

Its subcellular location is the cell inner membrane. It catalyses the reaction a quinone + NADH + 5 H(+)(in) = a quinol + NAD(+) + 4 H(+)(out). Functionally, NDH-1 shuttles electrons from NADH, via FMN and iron-sulfur (Fe-S) centers, to quinones in the respiratory chain. The immediate electron acceptor for the enzyme in this species is believed to be ubiquinone. Couples the redox reaction to proton translocation (for every two electrons transferred, four hydrogen ions are translocated across the cytoplasmic membrane), and thus conserves the redox energy in a proton gradient. The protein is NADH-quinone oxidoreductase subunit B of Rhizobium leguminosarum bv. trifolii (strain WSM2304).